The primary structure comprises 261 residues: Methyl jasmonate esterase 1 (261 aa).

Positions 8–251 constitute an AB hydrolase-1 domain; it reads FVLVHGACHG…MFSKPLDLCA (244 aa). The active-site Acyl-ester intermediate is the Ser-82. Catalysis depends on charge relay system residues Asp-211 and His-239.

It belongs to the AB hydrolase superfamily. Methylesterase family. In terms of assembly, homodimer.

It carries out the reaction methyl (-)-jasmonate + H2O = jasmonate + methanol + H(+). The catalysed reaction is methyl salicylate + H2O = salicylate + methanol + H(+). The protein operates within plant hormone biosynthesis. Its pathway is lipid metabolism; oxylipin biosynthesis. Functionally, methylesterase that catalyzes the hydrolysis of methyl jasmonate (MeJA) into jasmonate (JA). Can also use methyl salicylate (MeSA) as substrate with a lower efficiency. This is Methyl jasmonate esterase 1 from Vitis vinifera (Grape).